A 1060-amino-acid chain; its full sequence is Positive regulator of purine utilization (1060 aa).

The span at M1–A15 shows a compositional bias: polar residues. Residues M1–E48 form a disordered region. The zn(2)-C6 fungal-type DNA-binding region spans C67–C94. 5 disordered regions span residues E163–D207, S251–D282, A367–Y391, V811–M862, and R877–M969. Basic and acidic residues-rich tracts occupy residues S170–N182, K189–D207, and G260–P269. The segment covering A272–D282 has biased composition (polar residues). The segment covering A367–S377 has biased composition (basic and acidic residues). The span at V811–Y831 shows a compositional bias: polar residues. Composition is skewed to low complexity over residues S832 to R859 and P930 to G952.

The protein resides in the nucleus. In terms of biological role, mediates the induction of a number of unlinked genes involved in purine utilization. Binds to the consensus sequence 5'-TCGGNNNNNNCCGA-3'. This Emericella nidulans (strain FGSC A4 / ATCC 38163 / CBS 112.46 / NRRL 194 / M139) (Aspergillus nidulans) protein is Positive regulator of purine utilization (uaY).